A 94-amino-acid chain; its full sequence is PqqA binding protein (94 aa).

It belongs to the PqqD family. As to quaternary structure, monomer. Interacts with PqqE.

The protein operates within cofactor biosynthesis; pyrroloquinoline quinone biosynthesis. Functions as a PqqA binding protein and presents PqqA to PqqE, in the pyrroloquinoline quinone (PQQ) biosynthetic pathway. The chain is PqqA binding protein from Acinetobacter baumannii (strain AB307-0294).